Here is a 348-residue protein sequence, read N- to C-terminus: Phosphoribosylformylglycinamidine cyclo-ligase (348 aa).

The protein belongs to the AIR synthase family.

The protein resides in the cytoplasm. It carries out the reaction 2-formamido-N(1)-(5-O-phospho-beta-D-ribosyl)acetamidine + ATP = 5-amino-1-(5-phospho-beta-D-ribosyl)imidazole + ADP + phosphate + H(+). Its pathway is purine metabolism; IMP biosynthesis via de novo pathway; 5-amino-1-(5-phospho-D-ribosyl)imidazole from N(2)-formyl-N(1)-(5-phospho-D-ribosyl)glycinamide: step 2/2. This Geobacter metallireducens (strain ATCC 53774 / DSM 7210 / GS-15) protein is Phosphoribosylformylglycinamidine cyclo-ligase.